A 448-amino-acid chain; its full sequence is UDP-N-acetylmuramoylalanine--D-glutamate ligase (448 aa).

116-122 (GSNAKST) contacts ATP.

The protein belongs to the MurCDEF family.

The protein localises to the cytoplasm. It carries out the reaction UDP-N-acetyl-alpha-D-muramoyl-L-alanine + D-glutamate + ATP = UDP-N-acetyl-alpha-D-muramoyl-L-alanyl-D-glutamate + ADP + phosphate + H(+). Its pathway is cell wall biogenesis; peptidoglycan biosynthesis. Its function is as follows. Cell wall formation. Catalyzes the addition of glutamate to the nucleotide precursor UDP-N-acetylmuramoyl-L-alanine (UMA). The chain is UDP-N-acetylmuramoylalanine--D-glutamate ligase from Pseudomonas syringae pv. syringae (strain B728a).